Here is a 283-residue protein sequence, read N- to C-terminus: Elongation factor Ts (283 aa).

An involved in Mg(2+) ion dislocation from EF-Tu region spans residues 79–82; it reads TDFV.

This sequence belongs to the EF-Ts family.

The protein localises to the cytoplasm. Functionally, associates with the EF-Tu.GDP complex and induces the exchange of GDP to GTP. It remains bound to the aminoacyl-tRNA.EF-Tu.GTP complex up to the GTP hydrolysis stage on the ribosome. This chain is Elongation factor Ts, found in Shewanella oneidensis (strain ATCC 700550 / JCM 31522 / CIP 106686 / LMG 19005 / NCIMB 14063 / MR-1).